The following is a 541-amino-acid chain: Carotenoid-cleaving dioxygenase, mitochondrial (541 aa).

Fe cation contacts are provided by H188, H248, H319, and H535.

It belongs to the carotenoid oxygenase family. Requires Fe(2+) as cofactor. Widely expressed. Detected in heart, spleen, lung, intestine, colon, stomach, kidney, bladder, and prostate. Highly expressed in liver and testis (at protein level).

The protein resides in the mitochondrion. It catalyses the reaction all-trans-beta-carotene + O2 = beta-ionone + all-trans-10'-apo-beta-carotenal. It carries out the reaction 5-cis-lycopene + O2 = 5-cis-10'-apo-lycopenal + (3E,5E)-6,10-dimethylundeca-3,5,9-trien-2-one. The enzyme catalyses 13-cis-lycopene + O2 = 13-cis-10'-apo-lycopenal + (3E,5E)-6,10-dimethylundeca-3,5,9-trien-2-one. The catalysed reaction is lutein + O2 = (3R,6R)-hydroxy-alpha-ionone + (3R)-3-hydroxy-10'-apo-beta-carotenal. It catalyses the reaction lutein + O2 = (3R,6R)-3-hydroxy-10'-apo-alpha-carotenal + (3R)-hydroxy-beta-ionone. It carries out the reaction all-trans-zeaxanthin + 2 O2 = 4,9-dimethyldodeca-2,4,6,8,10-pentaenedial + 2 (3R)-hydroxy-beta-ionone. The enzyme catalyses all-trans-zeaxanthin + O2 = (3R)-3-hydroxy-10'-apo-beta-carotenal + (3R)-hydroxy-beta-ionone. The catalysed reaction is beta-cryptoxanthin + O2 = all-trans-10'-apo-beta-carotenal + (3R)-hydroxy-beta-ionone. It catalyses the reaction all-trans-10'-apo-beta-carotenal + O2 = beta-ionone + 4,9-dimethyldodeca-2,4,6,8,10-pentaenedial. It carries out the reaction (3R)-3-hydroxy-10'-apo-beta-carotenal + O2 = 4,9-dimethyldodeca-2,4,6,8,10-pentaenedial + (3R)-hydroxy-beta-ionone. The enzyme catalyses (3R,6R)-3-hydroxy-10'-apo-alpha-carotenal + O2 = (3R,6R)-hydroxy-alpha-ionone + 4,9-dimethyldodeca-2,4,6,8,10-pentaenedial. In terms of biological role, broad specificity mitochondrial dioxygenase that mediates the asymmetric oxidative cleavage of carotenoids. Cleaves carotenes (pure hydrocarbon carotenoids) such as all-trans-beta-carotene and lycopene as well as xanthophylls (oxygenated carotenoids) such as zeaxanthin, lutein and beta-cryptoxanthin at both the 9,10 and the 9',10' carbon-carbon double bond. Through its function in carotenoids metabolism regulates oxidative stress and the production of important signaling molecules. The protein is Carotenoid-cleaving dioxygenase, mitochondrial of Mustela putorius furo (European domestic ferret).